Consider the following 803-residue polypeptide: Zinc finger X-linked protein ZXDB (803 aa).

Disordered regions lie at residues Met-1–Asp-91, Glu-120–Thr-140, and Ala-218–Gly-260. Positions Leu-13–Gly-26 are enriched in gly residues. 10 consecutive C2H2-type zinc fingers follow at residues Tyr-271–His-295, Phe-304–His-328, Phe-334–His-358, Phe-364–His-386, Tyr-393–His-417, Phe-424–His-448, Phe-454–His-478, Phe-484–His-508, Phe-514–His-538, and Ser-547–His-572. Residues Tyr-271–Asp-577 form a required for interaction with ZXDC region. Residues Gln-576–Val-703 are required for transcriptional activation.

Belongs to the ZXD family. Self-associates. Interacts with ZXDC and CIITA. May be expressed in brain, heart, kidney, liver, lung, muscle and placenta.

It localises to the nucleus. Its function is as follows. Cooperates with CIITA to promote transcription of MHC class I and MHC class II genes. The sequence is that of Zinc finger X-linked protein ZXDB (ZXDB) from Homo sapiens (Human).